A 239-amino-acid polypeptide reads, in one-letter code: Aspartate/glutamate leucyltransferase (239 aa).

The protein belongs to the R-transferase family. Bpt subfamily.

The protein localises to the cytoplasm. The catalysed reaction is N-terminal L-glutamyl-[protein] + L-leucyl-tRNA(Leu) = N-terminal L-leucyl-L-glutamyl-[protein] + tRNA(Leu) + H(+). It carries out the reaction N-terminal L-aspartyl-[protein] + L-leucyl-tRNA(Leu) = N-terminal L-leucyl-L-aspartyl-[protein] + tRNA(Leu) + H(+). Its function is as follows. Functions in the N-end rule pathway of protein degradation where it conjugates Leu from its aminoacyl-tRNA to the N-termini of proteins containing an N-terminal aspartate or glutamate. The sequence is that of Aspartate/glutamate leucyltransferase from Campylobacter jejuni subsp. jejuni serotype O:2 (strain ATCC 700819 / NCTC 11168).